Consider the following 463-residue polypeptide: Serine/threonine-protein kinase tricornered (463 aa).

The Protein kinase domain maps to 93–394 (FEALKVIGRG…LEDLKSVPFF (302 aa)). ATP is bound by residues 99 to 107 (IGRGAFGEV) and Lys122. The interval 119–180 (YAMKVLRKAD…EFLPGGDMMT (62 aa)) is interaction with mats and Mob1. Catalysis depends on Asp216, which acts as the Proton acceptor. Position 292 is a phosphoserine (Ser292). Residues 395–463 (RGVDWEHIRE…YKRFEVRNLE (69 aa)) enclose the AGC-kinase C-terminal domain. Phosphothreonine is present on Thr453.

It belongs to the protein kinase superfamily. AGC Ser/Thr protein kinase family. In terms of assembly, interacts with, and is activated by, Mob1. Mg(2+) serves as cofactor. In terms of tissue distribution, expressed in the peripheral and central nervous system (at protein level). Expressed in the wing imaginal disk.

It localises to the cytoplasm. Its subcellular location is the nucleus. The enzyme catalyses L-seryl-[protein] + ATP = O-phospho-L-seryl-[protein] + ADP + H(+). It catalyses the reaction L-threonyl-[protein] + ATP = O-phospho-L-threonyl-[protein] + ADP + H(+). With respect to regulation, activated by fry. Its function is as follows. Serine/threonine-protein kinase involved in controlling cell structure and proliferation of a variety of polarized outgrowths including epidermal hairs, bristles, arista laterals, and dendrites. Together with fry, maintains the integrity of epidermal hairs and is an essential component of the signaling pathway regulating dendritic branching of sensory neurons. Reduces neurite outgrowth by phosphorylating pav, thereby inhibiting its function in microtubule-microtubule sliding. The protein is Serine/threonine-protein kinase tricornered of Drosophila melanogaster (Fruit fly).